Here is a 464-residue protein sequence, read N- to C-terminus: MKHRVKHIHFVGIGGVGMCGIAEVLHGLGYTVSGSDMADGATTKRLAAEGVRVFFGHDATYVEGADVVVTSTAVKADNPEVLAARDKRIPVIPRALMLAELMRFKQGIAIAGTHGKTTTTSLTASVLGAAGLDPTFVIGGKLTAAGTNAKLGLGEFLVAEADESDASFLHLTPVMAVVTNIDADHMDTYDHSFDKLKQAFVDFLQRMPFYGRAVLCVDDPNVREIRERVTKPVTTYGLDDSADIYAENVRAAAGQMHFDVVVKNGAITRFPLVLNLPGRHNVLNALSAIAIGLECGASIEAIQKGLSEFAGVGRRFQRYGEVKAQDGGSFTLIDDYGHHPVEMAATLAAVRGAFPDRRLLLAFQPHRYTRTRDLFEDFVKVLSGVDALLLSEVYAAGEAPIVAADGRALARAVRVGGKVEPLFVEDIADMPQAILDAARDGDVVVTMGAGSVGAVPGKVTALAG.

Residue 112 to 118 participates in ATP binding; that stretch reads GTHGKTT.

This sequence belongs to the MurCDEF family.

The protein resides in the cytoplasm. It carries out the reaction UDP-N-acetyl-alpha-D-muramate + L-alanine + ATP = UDP-N-acetyl-alpha-D-muramoyl-L-alanine + ADP + phosphate + H(+). Its pathway is cell wall biogenesis; peptidoglycan biosynthesis. Functionally, cell wall formation. In Chromobacterium violaceum (strain ATCC 12472 / DSM 30191 / JCM 1249 / CCUG 213 / NBRC 12614 / NCIMB 9131 / NCTC 9757 / MK), this protein is UDP-N-acetylmuramate--L-alanine ligase.